A 108-amino-acid polypeptide reads, in one-letter code: UPF0145 protein SYNPCC7002_A1337 (108 aa).

It belongs to the UPF0145 family.

The sequence is that of UPF0145 protein SYNPCC7002_A1337 from Picosynechococcus sp. (strain ATCC 27264 / PCC 7002 / PR-6) (Agmenellum quadruplicatum).